A 303-amino-acid polypeptide reads, in one-letter code: Glutathione transport system permease protein GsiD (303 aa).

6 consecutive transmembrane segments (helical) span residues 40–60 (AMTAALFVILLIVVAIFARWI), 105–125 (LAAGVFAVFIGAAIGTLLGLL), 144–164 (LFAFPGILLAIAVVAVLGSGI), 165–185 (ANVIIAVAIFSIPAFARLVRG), 222–242 (IVVFFTMRIGTSIISAASLSF), and 266–286 (VIAPHVAVFPVLAIFLTVLAF). Positions 101–290 (AQISLAAGVF…LTVLAFNLLG (190 aa)) constitute an ABC transmembrane type-1 domain.

It belongs to the binding-protein-dependent transport system permease family. As to quaternary structure, the complex is composed of two ATP-binding proteins (GsiA), two transmembrane proteins (GsiC and GsiD) and a solute-binding protein (GsiB).

The protein localises to the cell inner membrane. Part of the ABC transporter complex GsiABCD involved in glutathione import. Probably responsible for the translocation of the substrate across the membrane. The sequence is that of Glutathione transport system permease protein GsiD from Shigella dysenteriae serotype 1 (strain Sd197).